The primary structure comprises 752 residues: ATP-dependent RNA helicase DRS1 (752 aa).

2 disordered regions span residues 1–61 and 119–223; these read MVVG…NLDE and GLVK…TEGD. Acidic residues predominate over residues 19–34; it reads DSEDDVPILDSSDDEK. Basic residues predominate over residues 40-51; that stretch reads TTKKRKGKNNKK. The segment covering 124–142 has biased composition (basic and acidic residues); the sequence is AHIDSKQEEETEKEKVEKE. Acidic residues-rich tracts occupy residues 167–191 and 200–209; these read NQSE…QEEM and DEIDEEDDSE. Ser-208 carries the phosphoserine modification. Residues 231-259 carry the Q motif motif; that stretch reads ENFNSLSLSRPVLKGLASLGYVKPSPIQS. Positions 262–437 constitute a Helicase ATP-binding domain; that stretch reads IPIALLGKDI…SLSLKKPVRI (176 aa). Residue 275-282 participates in ATP binding; the sequence is AVTGSGKT. Positions 385–388 match the DEAD box motif; sequence DEAD. The 192-residue stretch at 448–639 folds into the Helicase C-terminal domain; sequence KLTQEFVRIR…SMNDTIEDIL (192 aa). A coiled-coil region spans residues 621–667; the sequence is IEETNKLVESMNDTIEDILVEEKEEKEILRAEMQLRKGENMLKHKKE. Positions 673–752 are disordered; that stretch reads RRTWFQSESD…NKKKGFKSRR (80 aa). Residues 694 to 705 are compositionally biased toward basic residues; sequence RNKKVTNSKKRK. The segment covering 722–734 has biased composition (basic and acidic residues); sequence TKTDRIADQERTF. Basic residues predominate over residues 735-752; sequence KKQKSTNSNKKKGFKSRR.

Belongs to the DEAD box helicase family. DDX27/DRS1 subfamily. Interacts with RRP1 and associates with pre-ribosomal particles.

The protein localises to the nucleus. The protein resides in the nucleolus. It carries out the reaction ATP + H2O = ADP + phosphate + H(+). Its function is as follows. ATP-binding RNA helicase involved in ribosome assembly. The sequence is that of ATP-dependent RNA helicase DRS1 (DRS1) from Saccharomyces cerevisiae (strain ATCC 204508 / S288c) (Baker's yeast).